The primary structure comprises 585 residues: 2-succinyl-5-enolpyruvyl-6-hydroxy-3-cyclohexene-1-carboxylate synthase (585 aa).

The protein belongs to the TPP enzyme family. MenD subfamily. Homodimer. It depends on Mg(2+) as a cofactor. Mn(2+) serves as cofactor. Thiamine diphosphate is required as a cofactor.

It catalyses the reaction isochorismate + 2-oxoglutarate + H(+) = 5-enolpyruvoyl-6-hydroxy-2-succinyl-cyclohex-3-ene-1-carboxylate + CO2. It functions in the pathway quinol/quinone metabolism; 1,4-dihydroxy-2-naphthoate biosynthesis; 1,4-dihydroxy-2-naphthoate from chorismate: step 2/7. Its pathway is cofactor biosynthesis; phylloquinone biosynthesis. In terms of biological role, catalyzes the thiamine diphosphate-dependent decarboxylation of 2-oxoglutarate and the subsequent addition of the resulting succinic semialdehyde-thiamine pyrophosphate anion to isochorismate to yield 2-succinyl-5-enolpyruvyl-6-hydroxy-3-cyclohexene-1-carboxylate (SEPHCHC). The polypeptide is 2-succinyl-5-enolpyruvyl-6-hydroxy-3-cyclohexene-1-carboxylate synthase (Crocosphaera subtropica (strain ATCC 51142 / BH68) (Cyanothece sp. (strain ATCC 51142))).